The sequence spans 616 residues: Centrosomal protein of 70 kDa (616 aa).

Coiled coils occupy residues 96 to 210 (EETT…EEER) and 273 to 335 (NYKG…NIKL). A TPR repeat occupies 502 to 535 (NGVFPRMNEVYTRLGEMNNAVRNLQELLELDSSS).

Directly interacts with tubulin-gamma; this interaction determines centrosomal localization.

Its subcellular location is the cytoplasm. It localises to the cytoskeleton. The protein resides in the microtubule organizing center. The protein localises to the centrosome. Functionally, plays a role in the organization of both preexisting and nascent microtubules in interphase cells. During mitosis, required for the organization and orientation of the mitotic spindle. The protein is Centrosomal protein of 70 kDa (Cep70) of Mus musculus (Mouse).